Reading from the N-terminus, the 518-residue chain is Integrator complex subunit 14 (518 aa).

The region spanning 2–204 (PTVVVMDVSL…KNVQSMFGKL (203 aa)) is the VWFA domain. 3 residues coordinate Mg(2+): S10, S12, and T86. N6-acetyllysine is present on K418.

Belongs to the Integrator subunit 14 family. As to quaternary structure, component of the Integrator complex, composed of core subunits INTS1, INTS2, INTS3, INTS4, INTS5, INTS6, INTS7, INTS8, INTS9/RC74, INTS10, INTS11/CPSF3L, INTS12, INTS13, INTS14 and INTS15. The core complex associates with protein phosphatase 2A subunits PPP2CA and PPP2R1A, to form the Integrator-PP2A (INTAC) complex. INTS14 is part of the tail subcomplex, composed of INTS10, INTS13, INTS14 and INTS15.

Its subcellular location is the nucleus. Component of the integrator complex, a multiprotein complex that terminates RNA polymerase II (Pol II) transcription in the promoter-proximal region of genes. The integrator complex provides a quality checkpoint during transcription elongation by driving premature transcription termination of transcripts that are unfavorably configured for transcriptional elongation: the complex terminates transcription by (1) catalyzing dephosphorylation of the C-terminal domain (CTD) of Pol II subunit POLR2A/RPB1 and SUPT5H/SPT5, (2) degrading the exiting nascent RNA transcript via endonuclease activity and (3) promoting the release of Pol II from bound DNA. The integrator complex is also involved in terminating the synthesis of non-coding Pol II transcripts, such as enhancer RNAs (eRNAs), small nuclear RNAs (snRNAs), telomerase RNAs and long non-coding RNAs (lncRNAs). Within the integrator complex, INTS14 is part of the integrator tail module that acts as a platform for the recruitment of transcription factors at promoters. The chain is Integrator complex subunit 14 from Bos taurus (Bovine).